Here is a 492-residue protein sequence, read N- to C-terminus: NADH-quinone oxidoreductase subunit N (492 aa).

Helical transmembrane passes span 16 to 36 (LLIP…VGVF), 44 to 64 (LYIT…FLEG), 81 to 101 (ISLL…LFFM), 111 to 131 (GAEF…MASS), 134 to 154 (LILI…LIAL), 168 to 188 (FIMG…LYAA), 210 to 230 (ILVF…VTLV), 244 to 264 (NALL…AVII), 276 to 296 (AFVE…PNLI), 306 to 326 (MLAY…LINT), 332 to 352 (VIFF…GILW), 382 to 402 (LAIL…FCVF), 423 to 443 (IMAI…IYIF), and 463 to 483 (FALS…QNLL).

Belongs to the complex I subunit 2 family. As to quaternary structure, NDH-1 is composed of 14 different subunits. Subunits NuoA, H, J, K, L, M, N constitute the membrane sector of the complex.

Its subcellular location is the cell inner membrane. The enzyme catalyses a quinone + NADH + 5 H(+)(in) = a quinol + NAD(+) + 4 H(+)(out). NDH-1 shuttles electrons from NADH, via FMN and iron-sulfur (Fe-S) centers, to quinones in the respiratory chain. The immediate electron acceptor for the enzyme in this species is believed to be ubiquinone. Couples the redox reaction to proton translocation (for every two electrons transferred, four hydrogen ions are translocated across the cytoplasmic membrane), and thus conserves the redox energy in a proton gradient. This is NADH-quinone oxidoreductase subunit N from Helicobacter hepaticus (strain ATCC 51449 / 3B1).